Reading from the N-terminus, the 262-residue chain is MQTIIRVEKLAKTFNQHQALHAVDLNIHHGEMVALLGPSGSGKSTLLRHLSGLITGDKSAGSHIELLGRTVQREGRLARDIRKSRANTGYIFQQFNLVNRLSVLENVLIGALGSTPFWRTCFSWFTREQKQRALQALTRVGMVHFAHQRVSTLSGGQQQRVAIARALMQQAKVILADEPIASLDPESARIVMDTLRDINQNDGITVVVTLHQVDYALRYCERIVALRQGHVFYDGSSQQFDNERFDHLYRSINRVEENAKAA.

The region spanning 5–253 (IRVEKLAKTF…RFDHLYRSIN (249 aa)) is the ABC transporter domain. 37–44 (GPSGSGKS) provides a ligand contact to ATP.

The protein belongs to the ABC transporter superfamily. Phosphonates importer (TC 3.A.1.9.1) family. In terms of assembly, the complex is composed of two ATP-binding proteins (PhnC), two transmembrane proteins (PhnE) and a solute-binding protein (PhnD).

The protein localises to the cell inner membrane. It carries out the reaction phosphonate(out) + ATP + H2O = phosphonate(in) + ADP + phosphate + H(+). Part of the ABC transporter complex PhnCDE involved in phosphonates import. Responsible for energy coupling to the transport system. This is Phosphonates import ATP-binding protein PhnC from Escherichia coli O6:K15:H31 (strain 536 / UPEC).